We begin with the raw amino-acid sequence, 431 residues long: Glucose-1-phosphate adenylyltransferase (431 aa).

Beta-D-fructose 1,6-bisphosphate is bound at residue lysine 39. AMP-binding residues include arginine 40, histidine 46, and arginine 52. Residue tyrosine 114 coordinates alpha-D-glucose 1-phosphate. Arginine 130 serves as a coordination point for AMP. Residues glycine 179, 194–195 (EK), and serine 212 each bind alpha-D-glucose 1-phosphate. Residues glutamate 370 and arginine 386 each coordinate AMP. Beta-D-fructose 1,6-bisphosphate is bound by residues 419-423 (REMLR) and 429-431 (QER).

The protein belongs to the bacterial/plant glucose-1-phosphate adenylyltransferase family. In terms of assembly, homotetramer.

The catalysed reaction is alpha-D-glucose 1-phosphate + ATP + H(+) = ADP-alpha-D-glucose + diphosphate. The protein operates within glycan biosynthesis; glycogen biosynthesis. With respect to regulation, allosterically activated by fructose-1,6-bisphosphate (F16BP) and inhibited by AMP. In terms of biological role, involved in the biosynthesis of ADP-glucose, a building block required for the elongation reactions to produce glycogen. Catalyzes the reaction between ATP and alpha-D-glucose 1-phosphate (G1P) to produce pyrophosphate and ADP-Glc. This chain is Glucose-1-phosphate adenylyltransferase, found in Salmonella dublin (strain CT_02021853).